Here is a 128-residue protein sequence, read N- to C-terminus: NADH dehydrogenase [ubiquinone] 1 beta subcomplex subunit 6 (128 aa).

Threonine 2 carries the post-translational modification N-acetylthreonine. At lysine 24 the chain carries N6-acetyllysine. A helical membrane pass occupies residues 68-86 (SIFVFTHILVPAWIIHYYM).

The protein belongs to the complex I NDUFB6 subunit family. As to quaternary structure, complex I is composed of 45 different subunits.

Its subcellular location is the mitochondrion inner membrane. Functionally, accessory subunit of the mitochondrial membrane respiratory chain NADH dehydrogenase (Complex I), that is believed not to be involved in catalysis. Complex I functions in the transfer of electrons from NADH to the respiratory chain. The immediate electron acceptor for the enzyme is believed to be ubiquinone. This is NADH dehydrogenase [ubiquinone] 1 beta subcomplex subunit 6 (NDUFB6) from Pongo abelii (Sumatran orangutan).